The primary structure comprises 438 residues: MVNKMKWRRTHYSADIKPEMDGQEVIIMGWVHSIRALGKIIFVILRDREGTVQIVAPKQKVGDELFSQIKKLGAEDVIAVKGKVIANEKAPNGFEILPLELEVINTAKRPLPLDPAEKVPAELDTRLENRFLDLRRPKVQAIFKIRSEMLKSVRNTLYNEGFIEVNTPKLVASCTEGGTELFPISYFEREAFLGQSPQLYKQMLMATGLDRVFEIAPIFRAEEHNTRRHLNEATSIDIEMAFADDKDAMDILEKVVYNAFVDVYENRKKEIETLGIEFELPPEKFDRITYDEAIDIANAKGVEISWGEDLSREAEKAIGEEMEGLYFITDWPSEIRPFYTMPDEKNPNICKAFDLMYKDLEISSGAQRIHLYDLLVENIKKKGLNPDGFTYYLEAFKYGMPPHAGWGLGADRFTMVLTQQENIRECVLFPRDRQRLTP.

Position 176 (Glu176) interacts with L-aspartate. The tract at residues Gln198–Lys201 is aspartate. Arg220 lines the L-aspartate pocket. ATP-binding positions include Arg220–Glu222, Arg228–Leu230, and Glu361. 2 residues coordinate Mg(2+): Glu361 and Ser364. L-aspartate contacts are provided by Ser364 and Arg368. ATP is bound at residue Gly409–Arg412.

It belongs to the class-II aminoacyl-tRNA synthetase family. Type 2 subfamily. In terms of assembly, homodimer. Mg(2+) serves as cofactor.

The protein resides in the cytoplasm. It carries out the reaction tRNA(Asx) + L-aspartate + ATP = L-aspartyl-tRNA(Asx) + AMP + diphosphate. In terms of biological role, aspartyl-tRNA synthetase with relaxed tRNA specificity since it is able to aspartylate not only its cognate tRNA(Asp) but also tRNA(Asn). Reaction proceeds in two steps: L-aspartate is first activated by ATP to form Asp-AMP and then transferred to the acceptor end of tRNA(Asp/Asn). In Methanocaldococcus jannaschii (strain ATCC 43067 / DSM 2661 / JAL-1 / JCM 10045 / NBRC 100440) (Methanococcus jannaschii), this protein is Aspartate--tRNA(Asp/Asn) ligase.